The primary structure comprises 439 residues: Enolase (439 aa).

Glutamine 163 is a binding site for (2R)-2-phosphoglycerate. Residue glutamate 205 is the Proton donor of the active site. Residues aspartate 242, glutamate 287, and aspartate 314 each coordinate Mg(2+). The (2R)-2-phosphoglycerate site is built by lysine 339, arginine 368, serine 369, and lysine 390. Catalysis depends on lysine 339, which acts as the Proton acceptor.

This sequence belongs to the enolase family. Requires Mg(2+) as cofactor.

Its subcellular location is the cytoplasm. It localises to the secreted. The protein localises to the cell surface. The enzyme catalyses (2R)-2-phosphoglycerate = phosphoenolpyruvate + H2O. Its pathway is carbohydrate degradation; glycolysis; pyruvate from D-glyceraldehyde 3-phosphate: step 4/5. Catalyzes the reversible conversion of 2-phosphoglycerate (2-PG) into phosphoenolpyruvate (PEP). It is essential for the degradation of carbohydrates via glycolysis. This Levilactobacillus brevis (strain ATCC 367 / BCRC 12310 / CIP 105137 / JCM 1170 / LMG 11437 / NCIMB 947 / NCTC 947) (Lactobacillus brevis) protein is Enolase.